The following is a 400-amino-acid chain: Sensor histidine kinase LnrJ (400 aa).

Topologically, residues 1–2 are extracellular; it reads MK. A helical membrane pass occupies residues 3–23; the sequence is ALFFTRMFTLMVSCLMYLSIV. Over 24-27 the chain is Cytoplasmic; the sequence is KEDN. A helical transmembrane segment spans residues 28 to 48; that stretch reads WFGYVFIAAGAAMYAANHVLL. Residues 49–61 lie on the Extracellular side of the membrane; that stretch reads TKETNAIWFCLID. Residues 62-82 form a helical membrane-spanning segment; sequence IAIGFSFGFIFPGTGLFIIML. Residues 83–101 are Cytoplasmic-facing; it reads CPVAVAFFLRGFPKRTAWS. A helical transmembrane segment spans residues 102–122; that stretch reads VLCLSSILFLTVLIRTYAMFG. Over 123-125 the chain is Extracellular; the sequence is NEF. A helical transmembrane segment spans residues 126 to 146; that stretch reads VIDHLTSMTFVVFCGVVGKLI. Topologically, residues 147-400 are cytoplasmic; that stretch reads RKLLDAQDTA…GPVQQKESLS (254 aa). One can recognise a Histidine kinase domain in the interval 190 to 385; the sequence is IYERNRMARE…TVNAEFSLAN (196 aa). Histidine 201 is subject to Phosphohistidine; by autocatalysis.

Post-translationally, autophosphorylated.

It localises to the cell membrane. It carries out the reaction ATP + protein L-histidine = ADP + protein N-phospho-L-histidine.. In terms of biological role, required for resistance to linearmycins, a family of antibiotic-specialized metabolites produced by some streptomycetes. Member of the two-component regulatory system LnrJ/LnrK, which induces expression of the LnrLMN ABC transporter in response to linearmycins and other polyenes. Acts as a specific sensor for linearmycin, either directly through binding or indirectly through membrane perturbation. Probably activates LnrK by phosphorylation. May also promote biofilm formation. This chain is Sensor histidine kinase LnrJ, found in Bacillus subtilis (strain 168).